The sequence spans 149 residues: UPF0179 protein TON_1048 (149 aa).

This sequence belongs to the UPF0179 family.

This Thermococcus onnurineus (strain NA1) protein is UPF0179 protein TON_1048.